The chain runs to 104 residues: Replication restart protein PriB (104 aa).

Residues 1-101 (MTNRLALSGT…LHAEQIELID (101 aa)) form the SSB domain.

It belongs to the PriB family. As to quaternary structure, homodimer. Interacts with PriA and DnaT. Component of the replication restart primosome. Primosome assembly occurs via a 'hand-off' mechanism. PriA binds to replication forks, subsequently PriB then DnaT bind; DnaT then displaces ssDNA to generate the helicase loading substrate.

Its function is as follows. Involved in the restart of stalled replication forks, which reloads the replicative helicase on sites other than the origin of replication; the PriA-PriB pathway is the major replication restart pathway. During primosome assembly it facilitates complex formation between PriA and DnaT on DNA; stabilizes PriA on DNA. Stimulates the DNA unwinding activity of PriA helicase. This chain is Replication restart protein PriB, found in Salmonella agona (strain SL483).